A 139-amino-acid chain; its full sequence is MTHSLVCPETVSRVSSVLNRNTRQFGKKHLFDQDEETCWNSDQGPSQWVTLEFPQLIRVSQLQIQFQGGFSSRRGCLEGSQGTQALHKIVDFYPEDNNSLQTFPIPAAEVDRLKVTFEDATDFFGRVVIYHLRVLGEKV.

This sequence belongs to the NR2C2AP family. In terms of assembly, interacts with NR2C2/TR4. Expressed in all tissues examined, with highest expression in heart, skeletal muscle and pancreas.

The protein localises to the nucleus. May act as a repressor of NR2C2-mediated transactivation by suppressing the binding between NR2C2/TR4 and the TR4-response element in target genes. The protein is Nuclear receptor 2C2-associated protein (NR2C2AP) of Homo sapiens (Human).